A 588-amino-acid chain; its full sequence is Adenine deaminase (588 aa).

Belongs to the metallo-dependent hydrolases superfamily. Adenine deaminase family. In terms of assembly, homodimer. Requires Mn(2+) as cofactor.

It catalyses the reaction adenine + H2O + H(+) = hypoxanthine + NH4(+). This Escherichia coli (strain 55989 / EAEC) protein is Adenine deaminase.